A 484-amino-acid polypeptide reads, in one-letter code: Malonate-semialdehyde dehydrogenase 2 (484 aa).

6 residues coordinate NAD(+): Phe153, Lys177, Glu180, Arg181, Ser230, and Thr252. The active-site Nucleophile is Cys285. Glu385 contacts NAD(+).

The protein belongs to the aldehyde dehydrogenase family. IolA subfamily. Homotetramer.

It carries out the reaction 3-oxopropanoate + NAD(+) + CoA + H2O = hydrogencarbonate + acetyl-CoA + NADH + H(+). The catalysed reaction is 2-methyl-3-oxopropanoate + NAD(+) + CoA + H2O = propanoyl-CoA + hydrogencarbonate + NADH + H(+). Its pathway is polyol metabolism; myo-inositol degradation into acetyl-CoA; acetyl-CoA from myo-inositol: step 7/7. Its function is as follows. Catalyzes the oxidation of malonate semialdehyde (MSA) and methylmalonate semialdehyde (MMSA) into acetyl-CoA and propanoyl-CoA, respectively. Is involved in a myo-inositol catabolic pathway. Bicarbonate, and not CO2, is the end-product of the enzymatic reaction. In Geobacillus kaustophilus (strain HTA426), this protein is Malonate-semialdehyde dehydrogenase 2.